Here is a 220-residue protein sequence, read N- to C-terminus: FMN-dependent NADH:quinone oxidoreductase (220 aa).

FMN-binding positions include S10, 17-19 (SAS), and 136-139 (SRGG). The segment at 200–220 (HSEAVTKAKELTERLTADNGR) is disordered.

The protein belongs to the azoreductase type 1 family. Homodimer. The cofactor is FMN.

The enzyme catalyses 2 a quinone + NADH + H(+) = 2 a 1,4-benzosemiquinone + NAD(+). The catalysed reaction is N,N-dimethyl-1,4-phenylenediamine + anthranilate + 2 NAD(+) = 2-(4-dimethylaminophenyl)diazenylbenzoate + 2 NADH + 2 H(+). Its function is as follows. Quinone reductase that provides resistance to thiol-specific stress caused by electrophilic quinones. Also exhibits azoreductase activity. Catalyzes the reductive cleavage of the azo bond in aromatic azo compounds to the corresponding amines. The protein is FMN-dependent NADH:quinone oxidoreductase of Streptomyces coelicolor (strain ATCC BAA-471 / A3(2) / M145).